The following is a 257-amino-acid chain: tRNA (guanine-N(7)-)-methyltransferase (257 aa).

The interval 1 to 58 (MQPIEQPGTGPDDITPESQDTNTAESAESGAETGHPRRIRSFVRRAGRTSTGQQRAIN) is disordered. Residues 16-26 (PESQDTNTAES) are compositionally biased toward polar residues. Basic residues predominate over residues 36–47 (PRRIRSFVRRAG). 4 residues coordinate S-adenosyl-L-methionine: E89, E114, D141, and D164. Residue D164 is part of the active site. K168 contributes to the substrate binding site. An interaction with RNA region spans residues 170–175 (RHNKRR). Substrate-binding positions include D200 and 235–238 (TKFE).

Belongs to the class I-like SAM-binding methyltransferase superfamily. TrmB family.

The catalysed reaction is guanosine(46) in tRNA + S-adenosyl-L-methionine = N(7)-methylguanosine(46) in tRNA + S-adenosyl-L-homocysteine. The protein operates within tRNA modification; N(7)-methylguanine-tRNA biosynthesis. Catalyzes the formation of N(7)-methylguanine at position 46 (m7G46) in tRNA. This is tRNA (guanine-N(7)-)-methyltransferase from Ralstonia pickettii (strain 12J).